The sequence spans 88 residues: Stannin (88 aa).

The Mitochondrial intermembrane portion of the chain corresponds to 1-10 (MSIMDHSPTT). A helical membrane pass occupies residues 11–31 (GVVTVIVILIAIAALGALILG). Residues 32–88 (CWCYLRLQRISQSEDEESIVGDGETKEPFLLVQYSAKGPCVERKAKLMTANSPEVHG) lie on the Cytoplasmic side of the membrane. Phosphoserine is present on residues serine 49 and serine 83.

It belongs to the stannin family. As to quaternary structure, monomer.

The protein resides in the mitochondrion outer membrane. Its function is as follows. Plays a role in the toxic effects of organotins. Plays a role in endosomal maturation. This is Stannin (Snn) from Mus musculus (Mouse).